We begin with the raw amino-acid sequence, 466 residues long: ATP synthase subunit beta (466 aa).

Position 155 to 162 (155 to 162 (GGAGVGKT)) interacts with ATP.

The protein belongs to the ATPase alpha/beta chains family. In terms of assembly, F-type ATPases have 2 components, CF(1) - the catalytic core - and CF(0) - the membrane proton channel. CF(1) has five subunits: alpha(3), beta(3), gamma(1), delta(1), epsilon(1). CF(0) has three main subunits: a(1), b(2) and c(9-12). The alpha and beta chains form an alternating ring which encloses part of the gamma chain. CF(1) is attached to CF(0) by a central stalk formed by the gamma and epsilon chains, while a peripheral stalk is formed by the delta and b chains.

The protein localises to the cell inner membrane. The catalysed reaction is ATP + H2O + 4 H(+)(in) = ADP + phosphate + 5 H(+)(out). Its function is as follows. Produces ATP from ADP in the presence of a proton gradient across the membrane. The catalytic sites are hosted primarily by the beta subunits. The polypeptide is ATP synthase subunit beta (Bordetella bronchiseptica (strain ATCC BAA-588 / NCTC 13252 / RB50) (Alcaligenes bronchisepticus)).